Consider the following 599-residue polypeptide: Proline--tRNA ligase (599 aa).

Belongs to the class-II aminoacyl-tRNA synthetase family. ProS type 1 subfamily. Homodimer.

The protein resides in the cytoplasm. It catalyses the reaction tRNA(Pro) + L-proline + ATP = L-prolyl-tRNA(Pro) + AMP + diphosphate. Functionally, catalyzes the attachment of proline to tRNA(Pro) in a two-step reaction: proline is first activated by ATP to form Pro-AMP and then transferred to the acceptor end of tRNA(Pro). As ProRS can inadvertently accommodate and process non-cognate amino acids such as alanine and cysteine, to avoid such errors it has two additional distinct editing activities against alanine. One activity is designated as 'pretransfer' editing and involves the tRNA(Pro)-independent hydrolysis of activated Ala-AMP. The other activity is designated 'posttransfer' editing and involves deacylation of mischarged Ala-tRNA(Pro). The misacylated Cys-tRNA(Pro) is not edited by ProRS. This Bifidobacterium animalis subsp. lactis (strain AD011) protein is Proline--tRNA ligase.